Consider the following 167-residue polypeptide: MNDLLSRAMRLLSQRDHSESELRRKLASQPFSAKGHWGKQTGRSDNEPVADIDPKVIEQVIAYCYQHNWLDDARFATSYINSRSRKGYGAQRIRSELMQKGVDKELIQAAFEISEINWCLLAKEVAQRKFSEILPIEWKEKVKVQRYLLYRGFFQEEIQSIYNDFVE.

The disordered stretch occupies residues 19-49 (ESELRRKLASQPFSAKGHWGKQTGRSDNEPV).

The protein belongs to the RecX family.

The protein localises to the cytoplasm. Modulates RecA activity. The chain is Regulatory protein RecX from Yersinia enterocolitica serotype O:8 / biotype 1B (strain NCTC 13174 / 8081).